Consider the following 107-residue polypeptide: Phosphoribosyl-ATP pyrophosphatase (107 aa).

This sequence belongs to the PRA-PH family.

It is found in the cytoplasm. The enzyme catalyses 1-(5-phospho-beta-D-ribosyl)-ATP + H2O = 1-(5-phospho-beta-D-ribosyl)-5'-AMP + diphosphate + H(+). The protein operates within amino-acid biosynthesis; L-histidine biosynthesis; L-histidine from 5-phospho-alpha-D-ribose 1-diphosphate: step 2/9. In Rhizobium johnstonii (strain DSM 114642 / LMG 32736 / 3841) (Rhizobium leguminosarum bv. viciae), this protein is Phosphoribosyl-ATP pyrophosphatase.